Consider the following 257-residue polypeptide: Baramicin A1 (257 aa).

Residues 1 to 19 (MKSFGLIALAICGVICVAA) form the signal peptide. The propeptide occupies 20–21 (EP). Glutamine 22 is subject to Pyrrolidone carboxylic acid. Positions 95 to 122 (GPNFSAKNLGPNGAKSVGIPQRARRSPQ) are disordered. A glycan (N-linked (GlcNAc...) asparagine) is linked at asparagine 97. Residues 118–121 (RRSP) constitute a propeptide that is removed on maturation. Glutamine 122 is subject to Pyrrolidone carboxylic acid. Positions 145 to 148 (RRSP) are excised as a propeptide. Residue glutamine 149 is modified to Pyrrolidone carboxylic acid. A propeptide spanning residues 172–175 (RRSP) is cleaved from the precursor. Glutamine 176 carries the post-translational modification Pyrrolidone carboxylic acid. The propeptide occupies 199-204 (RRGIND). N-linked (GlcNAc...) asparagine glycosylation is present at asparagine 225.

In terms of processing, proteolytically cleaved. In terms of tissue distribution, hemolymph (at protein level).

It localises to the secreted. Secreted immune-induced peptides induced by Toll signaling. Has a significant role in resistance to infection by the entomopathogenic fungus B.bassiana R444 and weak antifungal activity against M.rileyi PHP1705. In adult males, activity appears to be important for neuromuscular processes that mediate correct wing posture upon Toll activation. The polypeptide is Baramicin A1 (Drosophila melanogaster (Fruit fly)).